A 317-amino-acid polypeptide reads, in one-letter code: Acetylglutamate kinase (317 aa).

Substrate contacts are provided by residues 75-76 (GG), Arg-97, and Asn-196.

The protein belongs to the acetylglutamate kinase family. ArgB subfamily.

It localises to the cytoplasm. It carries out the reaction N-acetyl-L-glutamate + ATP = N-acetyl-L-glutamyl 5-phosphate + ADP. Its pathway is amino-acid biosynthesis; L-arginine biosynthesis; N(2)-acetyl-L-ornithine from L-glutamate: step 2/4. Functionally, catalyzes the ATP-dependent phosphorylation of N-acetyl-L-glutamate. The polypeptide is Acetylglutamate kinase (Corynebacterium jeikeium (strain K411)).